Here is a 179-residue protein sequence, read N- to C-terminus: MTSRLQVIQGDITQLSVDAIVNAANASLMGGGGVDGAIHRAAGPALLDACKLIRQQQGECQTGHAVITPAGKLSAKAVIHTVGPVWRGGEHQEAELLEEAYRNCLLLAEANHFRSIAFPAISTGVYGYPRAQAAEVAVRTVSDFITRYALPEQVYFVCYDEETARLYARLLTQQGDDPA.

In terms of domain architecture, Macro spans 1–175 (MTSRLQVIQG…LYARLLTQQG (175 aa)). Substrate is bound by residues 11–12 (DI), Asn25, 33–35 (GVD), and 122–126 (STGVY). Asp35 functions as the Proton acceptor in the catalytic mechanism.

Belongs to the MacroD-type family. YmdB subfamily. In terms of assembly, homodimer. Interacts with RNase III.

It catalyses the reaction 3''-O-acetyl-ADP-D-ribose + H2O = ADP-D-ribose + acetate + H(+). The catalysed reaction is 2''-O-acetyl-ADP-D-ribose + H2O = ADP-D-ribose + acetate + H(+). In terms of biological role, deacetylates O-acetyl-ADP ribose to yield ADP-ribose and free acetate. Down-regulates ribonuclease 3 (RNase III) activity. Acts by interacting directly with the region of the ribonuclease that is required for dimerization/activation. The sequence is that of O-acetyl-ADP-ribose deacetylase from Salmonella typhi.